Here is a 266-residue protein sequence, read N- to C-terminus: Glucosamine-6-phosphate deaminase (266 aa).

D72 functions as the Proton acceptor; for enolization step in the catalytic mechanism. The For ring-opening step role is filled by D141. H143 serves as the catalytic Proton acceptor; for ring-opening step. The active-site For ring-opening step is E148.

Belongs to the glucosamine/galactosamine-6-phosphate isomerase family. NagB subfamily. Homohexamer; trimer of disulfide-linked dimers.

It carries out the reaction alpha-D-glucosamine 6-phosphate + H2O = beta-D-fructose 6-phosphate + NH4(+). It participates in amino-sugar metabolism; N-acetylneuraminate degradation; D-fructose 6-phosphate from N-acetylneuraminate: step 5/5. Allosterically activated by N-acetylglucosamine 6-phosphate (GlcNAc6P). Its function is as follows. Catalyzes the reversible isomerization-deamination of glucosamine 6-phosphate (GlcN6P) to form fructose 6-phosphate (Fru6P) and ammonium ion. This chain is Glucosamine-6-phosphate deaminase, found in Shigella dysenteriae serotype 1 (strain Sd197).